Here is a 183-residue protein sequence, read N- to C-terminus: Bifunctional protein PyrR (183 aa).

Residues threonine 46–arginine 47, arginine 87, aspartate 107–threonine 115, arginine 140, and valine 164 each bind substrate. The PRPP-binding motif lies at valine 103–threonine 115.

This sequence belongs to the purine/pyrimidine phosphoribosyltransferase family. PyrR subfamily.

The enzyme catalyses UMP + diphosphate = 5-phospho-alpha-D-ribose 1-diphosphate + uracil. In terms of biological role, regulates the transcription of the pyrimidine nucleotide (pyr) operon in response to exogenous pyrimidines. Its function is as follows. Also displays a weak uracil phosphoribosyltransferase activity which is not physiologically significant. The sequence is that of Bifunctional protein PyrR from Thermosynechococcus vestitus (strain NIES-2133 / IAM M-273 / BP-1).